Consider the following 308-residue polypeptide: Cytochrome b (308 aa).

The next 4 membrane-spanning stretches (helical) occupy residues 1 to 21 (FGSL…LMAM), 45 to 66 (WLIR…YLHI), 81 to 101 (WNTG…GYVL), and 146 to 166 (FFAL…IHLT). H51 and H65 together coordinate heme b. The heme b site is built by H150 and H164. An a ubiquinone-binding site is contributed by H169. 3 helical membrane passes run 194-214 (TKDI…AMFS), 256-276 (LGGV…PFLH), and 288-308 (LSQL…WVGS).

This sequence belongs to the cytochrome b family. In terms of assembly, the cytochrome bc1 complex contains 11 subunits: 3 respiratory subunits (MT-CYB, CYC1 and UQCRFS1), 2 core proteins (UQCRC1 and UQCRC2) and 6 low-molecular weight proteins (UQCRH/QCR6, UQCRB/QCR7, UQCRQ/QCR8, UQCR10/QCR9, UQCR11/QCR10 and a cleavage product of UQCRFS1). This cytochrome bc1 complex then forms a dimer. Heme b serves as cofactor.

It localises to the mitochondrion inner membrane. Its function is as follows. Component of the ubiquinol-cytochrome c reductase complex (complex III or cytochrome b-c1 complex) that is part of the mitochondrial respiratory chain. The b-c1 complex mediates electron transfer from ubiquinol to cytochrome c. Contributes to the generation of a proton gradient across the mitochondrial membrane that is then used for ATP synthesis. In Asthenes dorbignyi (Creamy-breasted canastero), this protein is Cytochrome b (MT-CYB).